The primary structure comprises 1115 residues: G-protein coupled receptor GRL101 (1115 aa).

A signal peptide spans 1 to 24 (MATMSGTTIVCLIYLTTMLGNSQG). At 25–767 (VNLKIESPSP…SCEDLMSNHV (743 aa)) the chain is on the extracellular side. LDL-receptor class A domains follow at residues 36 to 79 (TLCS…TCGC), 77 to 115 (CGCLQSEFQCNHTTCIDKILRCDRNDDCSNGLDERECDI), 116 to 155 (YICPLGTHVKWHNHFCVPRDKQCDFLDDCGDNSDEKICER), 156 to 196 (RECV…ACDS), 195 to 232 (DSDKYFQCAEGSLIKKEFVCDGWVDCKLTFADELNCKL), 231 to 269 (KLCDEDDFRCSDTRCIQKSNVCDGYCDCKTCDDEEVCAN), 272 to 318 (YGCP…YCSN), 320 to 363 (SECK…SCLA), 365 to 403 (PKCSQDEFQCHHGKCIPISKRCDSVHDCVDWSDEMNCEN), 404 to 442 (HQCAANMKSCLSGHCIEEHKWCNFHRECPDGSDEKDCDP), 444 to 485 (PVCE…NCSQ), and 486 to 525 (HICLEGQFRCRKSFCINQTKVCDGTVDCLQGMWDENNCRY). 16 disulfides stabilise this stretch: C38/C53, C46/C66, C60/C77, C79/C91, C86/C104, C98/C113, C118/C131, C138/C153, C158/C170, C165/C183, C177/C194, C202/C220, C214/C230, C233/C245, C240/C258, and C252/C267. N-linked (GlcNAc...) asparagine glycosylation is present at N87. Residue N166 is glycosylated (N-linked (GlcNAc...) asparagine). The N-linked (GlcNAc...) asparagine glycan is linked to N269. Intrachain disulfides connect C274–C291, C282–C304, and C298–C316. N318 carries N-linked (GlcNAc...) asparagine glycosylation. Cystine bridges form between C322–C339, C334–C352, C346–C361, C367–C379, C374–C392, C386–C401, C406–C418, C413–C431, C425–C440, C446–C458, C453–C474, C465–C483, C488–C500, C495–C513, and C507–C523. The N-linked (GlcNAc...) asparagine glycan is linked to N482. An N-linked (GlcNAc...) asparagine glycan is attached at N502. An LRRNT domain is found at 518-562 (WDENNCRYWCPHGQAICQCEGVTMDCTGQKLKEMPVQQMEEDLSK). N-linked (GlcNAc...) asparagine glycosylation occurs at N571. LRR repeat units lie at residues 584–605 (KVTYLDLSRNHLTEIPIYSFQN), 608–629 (KLTHLNLADNNITSLKNGSLLG), 632–653 (NLKQLHINGNKIETIEEDTFSS), 656–677 (HLTVLDLSNQRLTHVYKNMFKG), 680–701 (QITVLNISRNQINSIDNGAFNN), and 704–725 (NVRLIDLSGNVIKDIGQKVFMG). 2 N-linked (GlcNAc...) asparagine glycosylation sites follow: N618 and N624. Residue N685 is glycosylated (N-linked (GlcNAc...) asparagine). The helical transmembrane segment at 768-788 (LRVSIWVLGVIALVGNFVVIF) threads the bilayer. Residues 789–801 (WRVRDFRGGKVHS) lie on the Cytoplasmic side of the membrane. The chain crosses the membrane as a helical span at residues 802–822 (FLITNLAIGDFLMGVYLLIIA). At 823–857 (TADTYYRGVYISHDENWKQSGLCQFAGFVSTFSSE) the chain is on the extracellular side. The helical transmembrane segment at 858–878 (LSVLTLSTITLDRLICILFPL) threads the bilayer. At 879-887 (RRTRLGLRQ) the chain is on the cytoplasmic side. The chain crosses the membrane as a helical span at residues 888-908 (AIIVMSCIWVLVFLLAVLPLL). The Extracellular portion of the chain corresponds to 909–941 (GFSYFENFYGRSGVCLALHVTPDRRPGWEYSVG). A helical transmembrane segment spans residues 942 to 962 (VFILLNLLSFVLIASSYLWMF). The Cytoplasmic portion of the chain corresponds to 963-988 (SVAKKTRSAVRTAESKNDNAMARRMT). The helical transmembrane segment at 989 to 1009 (LIVMTDFCCWVPIIVLGFVSL) threads the bilayer. At 1010–1017 (AGARADDQ) the chain is on the extracellular side. The helical transmembrane segment at 1018–1038 (VYAWIAVFVLPLNSATNPVIY) threads the bilayer. The Cytoplasmic segment spans residues 1039–1115 (TLSTAPFLGN…YYNTELHSDS (77 aa)).

This sequence belongs to the G-protein coupled receptor 1 family. As to expression, predominantly expressed in a small number of neurons within the central nervous system and to a lesser extent in the heart.

It localises to the cell membrane. Functionally, might directly transduce signals carried by large extracellular lipoprotein complexes into neuronal events. This Lymnaea stagnalis (Great pond snail) protein is G-protein coupled receptor GRL101.